The following is a 542-amino-acid chain: Peptide chain release factor 3 (542 aa).

A tr-type G domain is found at 14 to 283 (ELRRNFAIIS…YFLEYALKPG (270 aa)). GTP is bound by residues 23–30 (SHPDAGKT), 91–95 (DTPGH), and 145–148 (NKLD).

Belongs to the TRAFAC class translation factor GTPase superfamily. Classic translation factor GTPase family. PrfC subfamily.

Its subcellular location is the cytoplasm. Its function is as follows. Increases the formation of ribosomal termination complexes and stimulates activities of RF-1 and RF-2. It binds guanine nucleotides and has strong preference for UGA stop codons. It may interact directly with the ribosome. The stimulation of RF-1 and RF-2 is significantly reduced by GTP and GDP, but not by GMP. This Nostoc punctiforme (strain ATCC 29133 / PCC 73102) protein is Peptide chain release factor 3.